A 182-amino-acid chain; its full sequence is Putative lipoprotein LpqE (182 aa).

Positions 1–29 are cleaved as a signal peptide; sequence MNRCNIRLRLAGMTTWVASIALLAAALSG. The N-palmitoyl cysteine moiety is linked to residue Cys-30. A lipid anchor (S-diacylglycerol cysteine) is attached at Cys-30.

It localises to the cell membrane. This Mycobacterium bovis (strain ATCC BAA-935 / AF2122/97) protein is Putative lipoprotein LpqE (lpqE).